The chain runs to 127 residues: NADPH-dependent 7-cyano-7-deazaguanine reductase (127 aa).

C40 serves as the catalytic Thioimide intermediate. The Proton donor role is filled by D47. Substrate is bound by residues 62 to 64 and 81 to 82; these read VEL and HE.

It belongs to the GTP cyclohydrolase I family. QueF type 1 subfamily.

It localises to the cytoplasm. The catalysed reaction is 7-aminomethyl-7-carbaguanine + 2 NADP(+) = 7-cyano-7-deazaguanine + 2 NADPH + 3 H(+). The protein operates within tRNA modification; tRNA-queuosine biosynthesis. Functionally, catalyzes the NADPH-dependent reduction of 7-cyano-7-deazaguanine (preQ0) to 7-aminomethyl-7-deazaguanine (preQ1). This Campylobacter jejuni (strain RM1221) protein is NADPH-dependent 7-cyano-7-deazaguanine reductase.